A 237-amino-acid chain; its full sequence is Uridylate kinase (237 aa).

12 to 15 lines the ATP pocket; that stretch reads KLSG. The involved in allosteric activation by GTP stretch occupies residues 20–25; it reads GDEGFG. Glycine 54 is a UMP binding site. ATP-binding residues include glycine 55 and arginine 59. Residues aspartate 74 and 135–142 each bind UMP; that span reads TGSPFFTT. Threonine 162, tyrosine 168, and aspartate 171 together coordinate ATP.

It belongs to the UMP kinase family. As to quaternary structure, homohexamer.

The protein resides in the cytoplasm. It catalyses the reaction UMP + ATP = UDP + ADP. It functions in the pathway pyrimidine metabolism; CTP biosynthesis via de novo pathway; UDP from UMP (UMPK route): step 1/1. Allosterically activated by GTP. Inhibited by UTP. In terms of biological role, catalyzes the reversible phosphorylation of UMP to UDP. The chain is Uridylate kinase from Actinobacillus pleuropneumoniae serotype 5b (strain L20).